The sequence spans 521 residues: Type-1 glutamine synthetase 2 (521 aa).

In terms of domain architecture, GS beta-grasp spans 76–176 (NQIKISKSPF…FLMDFIGTNG (101 aa)). The GS catalytic domain maps to 183 to 521 (PRSTLKKVIK…WELERYLEII (339 aa)).

This sequence belongs to the glutamine synthetase family.

The enzyme catalyses L-glutamate + NH4(+) + ATP = L-glutamine + ADP + phosphate + H(+). The sequence is that of Type-1 glutamine synthetase 2 (glnA2) from Dictyostelium discoideum (Social amoeba).